The following is a 94-amino-acid chain: Probable FAD-linked sulfhydryl oxidase FPV093 (94 aa).

One can recognise an ERV/ALR sulfhydryl oxidase domain in the interval 1–94 (MDPRYWGSSF…IDIKKVKKLI (94 aa)). Cys41 and Cys44 are oxidised to a cystine.

Belongs to the poxviruses E10 family. Requires FAD as cofactor.

The enzyme catalyses 2 R'C(R)SH + O2 = R'C(R)S-S(R)CR' + H2O2. FAD-dependent sulfhydryl oxidase that catalyzes disulfide bond formation. The sequence is that of Probable FAD-linked sulfhydryl oxidase FPV093 from Fowlpox virus (strain NVSL) (FPV).